An 898-amino-acid chain; its full sequence is Cilium assembly protein DZIP1 (898 aa).

Residues 14-66 (DPPGTHSSAGIPSLLSSPQSQPSSGSQSRPAPSTMSGPLTSSGASTSIPPPFK) form a disordered region. The span at 25-46 (PSLLSSPQSQPSSGSQSRPAPS) shows a compositional bias: low complexity. Residues 47–60 (TMSGPLTSSGASTS) are compositionally biased toward polar residues. A coiled-coil region spans residues 145 to 197 (LSISLQAAEERLLAEAREREQICVQLQKKTQDAKALKEELKQRKKIIASQQAM). The C2H2-type zinc finger occupies 207–230 (HKCQHCEKAFMNASFLQSHMQRRH). 2 coiled-coil regions span residues 242–353 (NQKK…VQTQ) and 407–447 (SAVS…ISSK). Residues 435 to 463 (TSQNKQMKQISSKPPTITVQREGVSTPSP) show a composition bias toward polar residues. 3 disordered regions span residues 435–509 (TSQN…SWQK), 585–739 (EQRV…WTDG), and 773–878 (KSLE…DAGT). A compositionally biased stretch (low complexity) spans 495-505 (SSISESPTENR). Positions 573–590 (YRRALKEISHKLEQRVKE) form a coiled coil. Residues 605 to 652 (VVQSRPRSSSFPSTVTRVMSGPASKQQRTPQPVPRSRTNVPHKTSTPL) are compositionally biased toward polar residues. Acidic residues predominate over residues 662 to 684 (SDEDSSEEEEEEEEEEESSDEES). Composition is skewed to polar residues over residues 685-715 (PQMQKKTVLVNSSTAKAQNTAKTQSTAQSVR) and 723-734 (AEPTNVTTLSDS). Over residues 797 to 815 (KPTDVRNTRQNAKKELKYS) the composition is skewed to basic and acidic residues. Acidic residues predominate over residues 816–826 (DDDDDDDDDWD). A compositionally biased stretch (polar residues) spans 855–866 (DTSTSVWGSSTG).

Belongs to the DZIP C2H2-type zinc-finger protein family. Expressed throughout the embryo starting at 12 hours.

It localises to the cell projection. The protein resides in the cilium. Its subcellular location is the cytoplasm. It is found in the cytoskeleton. The protein localises to the cilium basal body. It localises to the microtubule organizing center. The protein resides in the centrosome. Its subcellular location is the centriole. It is found in the nucleus. In terms of biological role, molecular adapter that recruits protein complexes required for cilium assembly and function to the cilium basal body. Required for establishment of left-right asymmetry during embryogenesis. Acts as a permissive factor that is required for the proper regulation of Hedgehog (Hh) target genes in response to Hh signals. Acts downstream of the Smoothened protein to modulate Gli activity in the somites of the developing embryo. The polypeptide is Cilium assembly protein DZIP1 (dzip1) (Danio rerio (Zebrafish)).